A 216-amino-acid polypeptide reads, in one-letter code: PRA1 family protein B6 (216 aa).

Position 2 is an N-acetylalanine (alanine 2). Transmembrane regions (helical) follow at residues 83-103 (LVAI…FLLA), 105-125 (LAAS…LVIG), 135-155 (LGIL…GSLL), 159-179 (LAVG…EDLF), and 186-206 (IGSG…AAAI).

Belongs to the PRA1 family. Interacts with PRA1B1, PRA1B2, PRA1B3, PRA1B4, PRA1B5 and PRA1E. Expressed in hypocotyls, roots, lateral roots, lateral root caps, columella cells, leaves and stomata.

It localises to the endoplasmic reticulum membrane. Functionally, may be involved in both secretory and endocytic intracellular trafficking in the endosomal/prevacuolar compartments. This Arabidopsis thaliana (Mouse-ear cress) protein is PRA1 family protein B6 (PRA1B6).